A 248-amino-acid polypeptide reads, in one-letter code: E3 ubiquitin-protein ligase BIG BROTHER (248 aa).

The segment at 197 to 238 adopts an RING-type; atypical zinc-finger fold; that stretch reads CVICQLKYKIGERQMNLPCKHVYHSECISKWLSINKVCPVCN.

As to quaternary structure, interacts with the E2 ubiquitin conjugating enzyme UBC10 via the RING domain. Interacts with DA1. Post-translationally, auto-ubiquitinated. Mostly expressed in inflorescence, and, to a lower extent, in seedlings, roots, stems, leaves and siliques.

The enzyme catalyses S-ubiquitinyl-[E2 ubiquitin-conjugating enzyme]-L-cysteine + [acceptor protein]-L-lysine = [E2 ubiquitin-conjugating enzyme]-L-cysteine + N(6)-ubiquitinyl-[acceptor protein]-L-lysine.. Its pathway is protein modification; protein ubiquitination. E3 ubiquitin-protein ligase that limits organ size, and possibly seed size, in a dose-dependent manner. Negatively regulates the duration of cell proliferation in leaves and petals independently of the major phytohormones (e.g. auxin, cytokinin, gibberellin, brassinosteroids, ethylene, abscisic acid, jasmonic acid), probably by targeting growth stimulators for degradation. Limits the proliferation of root meristematic cells. Polyubiquitinates DA1. Involved in the promotion of leaf senescence, in addition to its function in restricting plant growth. Possesses E3 ubiquitin-protein ligase activity in vitro. The chain is E3 ubiquitin-protein ligase BIG BROTHER (BB) from Arabidopsis thaliana (Mouse-ear cress).